Reading from the N-terminus, the 398-residue chain is Serpin-Z1C (398 aa).

The RCL stretch occupies residues 343 to 367 (GTEAAASTAIKMALLQARPPSVMDF).

It belongs to the serpin family.

Its function is as follows. Inhibits chymotrypsin and cathepsin G in vitro. This Triticum aestivum (Wheat) protein is Serpin-Z1C.